The following is a 308-amino-acid chain: Tetraacyldisaccharide 4'-kinase (308 aa).

63–70 (SFGGNGKT) contributes to the ATP binding site.

It belongs to the LpxK family.

It carries out the reaction a lipid A disaccharide + ATP = a lipid IVA + ADP + H(+). It functions in the pathway glycolipid biosynthesis; lipid IV(A) biosynthesis; lipid IV(A) from (3R)-3-hydroxytetradecanoyl-[acyl-carrier-protein] and UDP-N-acetyl-alpha-D-glucosamine: step 6/6. Its function is as follows. Transfers the gamma-phosphate of ATP to the 4'-position of a tetraacyldisaccharide 1-phosphate intermediate (termed DS-1-P) to form tetraacyldisaccharide 1,4'-bis-phosphate (lipid IVA). The sequence is that of Tetraacyldisaccharide 4'-kinase from Campylobacter jejuni subsp. jejuni serotype O:23/36 (strain 81-176).